We begin with the raw amino-acid sequence, 235 residues long: Large ribosomal subunit protein uL1 (235 aa).

This sequence belongs to the universal ribosomal protein uL1 family. In terms of assembly, part of the 50S ribosomal subunit.

Its function is as follows. Binds directly to 23S rRNA. The L1 stalk is quite mobile in the ribosome, and is involved in E site tRNA release. Protein L1 is also a translational repressor protein, it controls the translation of the L11 operon by binding to its mRNA. The chain is Large ribosomal subunit protein uL1 from Synechococcus sp. (strain CC9605).